The sequence spans 141 residues: Vesicle-associated membrane protein 4 (141 aa).

The segment at 1-51 is disordered; sequence MPPKFKRHLNDDDVTGSVKSERRNLLEDDSDEEEDFFLRGPSGPRFGPRND. Over 1–115 the chain is Cytoplasmic; sequence MPPKFKRHLN…RRQMWWRGCK (115 aa). Phosphoserine occurs at positions 17 and 30. Positions 52–112 constitute a v-SNARE coiled-coil homology domain; sequence KIKHVQNQVD…KQLRRQMWWR (61 aa). A helical; Anchor for type IV membrane protein membrane pass occupies residues 116 to 136; that stretch reads IKAIMALVAVILLLVIIILIV. Topologically, residues 137–141 are vesicular; it reads VKYRT.

The protein belongs to the synaptobrevin family. In terms of assembly, identified in a complex containing STX6, STX12, VAMP4 and VTI1A. Interacts with BAIAP3; this interaction is increased in the presence of calcium.

Its subcellular location is the golgi apparatus. The protein resides in the trans-Golgi network membrane. Its function is as follows. Involved in the pathway that functions to remove an inhibitor (probably synaptotagmin-4) of calcium-triggered exocytosis during the maturation of secretory granules. May be a marker for this sorting pathway that is critical for remodeling the secretory response of granule. The chain is Vesicle-associated membrane protein 4 (VAMP4) from Bos taurus (Bovine).